A 364-amino-acid chain; its full sequence is Putative transport protein BUsg_115 (364 aa).

9 helical membrane-spanning segments follow: residues 18–38 (IFIIAISATSFLIIQPFILGF), 40–60 (WASMIVIATWPLMLKMQKFLG), 65–85 (VAVIGMIIILLLLFIIPIVFL), 161–181 (GLFIMHLTLMLLFSLLLYWNG), 215–235 (ALGVVVTALIQAVLSGIGLLI), 243–263 (LLMILIVFSCLIQLGPLPILI), 280–300 (LLLIWSCFVFILDNILRPFFI), 309–329 (FLILLGVIGGLLAFGMIGLFI), and 331–351 (PVVLVILYRLIVSWIYGISIA).

The protein belongs to the autoinducer-2 exporter (AI-2E) (TC 2.A.86) family.

Its subcellular location is the cell membrane. The chain is Putative transport protein BUsg_115 from Buchnera aphidicola subsp. Schizaphis graminum (strain Sg).